The sequence spans 403 residues: Serine/threonine transporter SstT (403 aa).

10 helical membrane-spanning segments follow: residues 15 to 35 (LGLI…AIVW), 49 to 69 (FISA…MTAI), 85 to 105 (LLYV…SFIF), 142 to 162 (ALLN…GMML), 183 to 203 (IVQL…AGTL), 218 to 238 (LAVI…LIVF), 246 to 268 (YPLV…SSAA), 289 to 309 (ISIP…ISVI), 317 to 337 (LGIG…SLAA), and 362 to 382 (PDVA…QDAT).

Belongs to the dicarboxylate/amino acid:cation symporter (DAACS) (TC 2.A.23) family.

It is found in the cell inner membrane. It carries out the reaction L-serine(in) + Na(+)(in) = L-serine(out) + Na(+)(out). The catalysed reaction is L-threonine(in) + Na(+)(in) = L-threonine(out) + Na(+)(out). Involved in the import of serine and threonine into the cell, with the concomitant import of sodium (symport system). This chain is Serine/threonine transporter SstT, found in Chromohalobacter salexigens (strain ATCC BAA-138 / DSM 3043 / CIP 106854 / NCIMB 13768 / 1H11).